We begin with the raw amino-acid sequence, 419 residues long: Serine hydroxymethyltransferase (419 aa).

Residues Leu121 and 125-127 (GHL) each bind (6S)-5,6,7,8-tetrahydrofolate. Lys230 carries the post-translational modification N6-(pyridoxal phosphate)lysine. 355–357 (SPF) lines the (6S)-5,6,7,8-tetrahydrofolate pocket.

It belongs to the SHMT family. As to quaternary structure, homodimer. The cofactor is pyridoxal 5'-phosphate.

The protein localises to the cytoplasm. It carries out the reaction (6R)-5,10-methylene-5,6,7,8-tetrahydrofolate + glycine + H2O = (6S)-5,6,7,8-tetrahydrofolate + L-serine. The protein operates within one-carbon metabolism; tetrahydrofolate interconversion. It functions in the pathway amino-acid biosynthesis; glycine biosynthesis; glycine from L-serine: step 1/1. Functionally, catalyzes the reversible interconversion of serine and glycine with tetrahydrofolate (THF) serving as the one-carbon carrier. This reaction serves as the major source of one-carbon groups required for the biosynthesis of purines, thymidylate, methionine, and other important biomolecules. Also exhibits THF-independent aldolase activity toward beta-hydroxyamino acids, producing glycine and aldehydes, via a retro-aldol mechanism. The polypeptide is Serine hydroxymethyltransferase (Streptococcus equi subsp. zooepidemicus (strain H70)).